A 624-amino-acid chain; its full sequence is Ubiquilin-2 (624 aa).

2 disordered regions span residues 1 to 32 and 106 to 141; these read MAEN…EPKI and NRPQ…TNSN. Ala-2 carries the post-translational modification N-acetylalanine. Residues 15-32 are compositionally biased toward low complexity; that stretch reads RGPAAAQGSAAAPAEPKI. The Ubiquitin-like domain maps to 33–107; it reads IKVTVKTPKE…VHLVIKSQNR (75 aa). Over residues 106–115 the composition is skewed to polar residues; the sequence is NRPQGQSTQP. Positions 116–141 are enriched in low complexity; sequence SNAAGTNTTSASTPRSNSTPISTNSN. 2 STI1 domains span residues 178-206 and 208-247; these read SPEM…QLIM and NPQM…MQEM. Positions 287 to 349 are disordered; sequence FGGNPFASVG…SGSGNSSSNA (63 aa). Residues 294–304 show a composition bias toward low complexity; sequence SVGSSSSSGEG. Over residues 316 to 325 the composition is skewed to pro residues; it reads LPNPWAPPPA. Low complexity predominate over residues 326–349; that stretch reads TQSSATTSTTTSTGSGSGNSSSNA. STI1 domains lie at 379 to 426 and 430 to 462; these read NPQL…QEQM and LPAF…QQGL. Repeat copies occupy residues 491–493, 494–496, 497–499, 500–502, 503–505, 506–508, 509–511, 512–514, 515–517, 518–520, 521–523, and 524–526. The segment at 491-526 is 12 X 3 AA tandem repeats of P-X-X; it reads PVGPVTPIGPIGPIVPFTPIGPIGPIGPTGPAAPPG. The tract at residues 512-556 is disordered; it reads PIGPIGPTGPAAPPGSTGSGGPTGPTVSSAAPSETTSPTSESGPN. Low complexity predominate over residues 535 to 553; sequence GPTVSSAAPSETTSPTSES. In terms of domain architecture, UBA spans 581-621; it reads RFQQQLEQLNAMGFLNREANLQALIATGGDINAAIERLLGS.

As to quaternary structure, homodimer. Forms heterodimer with UBQLN1. Binds UBE3A and BTRC. Interacts with the 19S proteasome subunit. Interacts with C9orf72. Interacts with HNRNPA1 and HNRNPU. Found in a complex with UBQLN1 and MAP1LC3A/B/C. Interacts with EPS15, EPN1 and EPN2. Interacts with HERPUD1. Interacts with RAD23A. Interacts with TARDBP. Interacts (via C-terminus) with FAF2 (via N-terminus). Interacts with UBQLN4. Binds CD47. Degraded during macroautophagy.

It is found in the cytoplasm. The protein resides in the nucleus. The protein localises to the membrane. Its subcellular location is the cytoplasmic vesicle. It localises to the autophagosome. Plays an important role in the regulation of different protein degradation mechanisms and pathways including ubiquitin-proteasome system (UPS), autophagy and the endoplasmic reticulum-associated protein degradation (ERAD) pathway. Mediates the proteasomal targeting of misfolded or accumulated proteins for degradation by binding (via UBA domain) to their polyubiquitin chains and by interacting (via ubiquitin-like domain) with the subunits of the proteasome. Plays a role in the ERAD pathway via its interaction with ER-localized proteins FAF2/UBXD8 and HERPUD1 and may form a link between the polyubiquitinated ERAD substrates and the proteasome. Involved in the regulation of macroautophagy and autophagosome formation; required for maturation of autophagy-related protein LC3 from the cytosolic form LC3-I to the membrane-bound form LC3-II and may assist in the maturation of autophagosomes to autolysosomes by mediating autophagosome-lysosome fusion. Negatively regulates the endocytosis of GPCR receptors: AVPR2 and ADRB2, by specifically reducing the rate at which receptor-arrestin complexes concentrate in clathrin-coated pits (CCPs). The polypeptide is Ubiquilin-2 (UBQLN2) (Homo sapiens (Human)).